We begin with the raw amino-acid sequence, 210 residues long: Orotate phosphoribosyltransferase (210 aa).

Residues Arg94, Lys98, His100, and 120-128 contribute to the 5-phospho-alpha-D-ribose 1-diphosphate site; that span reads EDLISTGGS. An orotate-binding site is contributed by Ser124.

It belongs to the purine/pyrimidine phosphoribosyltransferase family. PyrE subfamily. Homodimer. Mg(2+) is required as a cofactor.

It carries out the reaction orotidine 5'-phosphate + diphosphate = orotate + 5-phospho-alpha-D-ribose 1-diphosphate. The protein operates within pyrimidine metabolism; UMP biosynthesis via de novo pathway; UMP from orotate: step 1/2. Catalyzes the transfer of a ribosyl phosphate group from 5-phosphoribose 1-diphosphate to orotate, leading to the formation of orotidine monophosphate (OMP). The sequence is that of Orotate phosphoribosyltransferase from Bacillus cereus (strain G9842).